Here is a 267-residue protein sequence, read N- to C-terminus: GTP cyclohydrolase MptA (267 aa).

This sequence belongs to the GTP cyclohydrolase IV family. Homodimer. It depends on Fe(2+) as a cofactor.

It carries out the reaction GTP + H2O = 7,8-dihydroneopterin 2',3'-cyclic phosphate + formate + diphosphate + H(+). Its pathway is cofactor biosynthesis; 5,6,7,8-tetrahydromethanopterin biosynthesis. In terms of biological role, converts GTP to 7,8-dihydro-D-neopterin 2',3'-cyclic phosphate, the first intermediate in the biosynthesis of coenzyme methanopterin. This Thermococcus kodakarensis (strain ATCC BAA-918 / JCM 12380 / KOD1) (Pyrococcus kodakaraensis (strain KOD1)) protein is GTP cyclohydrolase MptA.